The following is a 99-amino-acid chain: Aspartyl/glutamyl-tRNA(Asn/Gln) amidotransferase subunit C (99 aa).

The protein belongs to the GatC family. In terms of assembly, heterotrimer of A, B and C subunits.

It catalyses the reaction L-glutamyl-tRNA(Gln) + L-glutamine + ATP + H2O = L-glutaminyl-tRNA(Gln) + L-glutamate + ADP + phosphate + H(+). The enzyme catalyses L-aspartyl-tRNA(Asn) + L-glutamine + ATP + H2O = L-asparaginyl-tRNA(Asn) + L-glutamate + ADP + phosphate + 2 H(+). Functionally, allows the formation of correctly charged Asn-tRNA(Asn) or Gln-tRNA(Gln) through the transamidation of misacylated Asp-tRNA(Asn) or Glu-tRNA(Gln) in organisms which lack either or both of asparaginyl-tRNA or glutaminyl-tRNA synthetases. The reaction takes place in the presence of glutamine and ATP through an activated phospho-Asp-tRNA(Asn) or phospho-Glu-tRNA(Gln). This is Aspartyl/glutamyl-tRNA(Asn/Gln) amidotransferase subunit C from Paraburkholderia xenovorans (strain LB400).